We begin with the raw amino-acid sequence, 285 residues long: HTH-type transcriptional regulator MurR (285 aa).

An HTH rpiR-type domain is found at 1–77 (MLYLTKIRNA…MALIGEYSAS (77 aa)). The H-T-H motif DNA-binding region spans 37–56 (SRKMAKQLGISQSSIVKFAQ). The 141-residue stretch at 128 to 268 (IIEVISKAPF…FVGLVQLNDV (141 aa)) folds into the SIS domain.

Homotetramer.

It participates in amino-sugar metabolism; N-acetylmuramate degradation [regulation]. In terms of biological role, represses the expression of the murPQ operon involved in the uptake and degradation of N-acetylmuramic acid (MurNAc). Binds to two adjacent inverted repeats within the operator region. MurNAc 6-phosphate, the substrate of MurQ, is the specific inducer that weakens binding of MurR to the operator. This Shigella sonnei (strain Ss046) protein is HTH-type transcriptional regulator MurR.